Consider the following 354-residue polypeptide: 3'-5' exonuclease (354 aa).

The disordered stretch occupies residues 1-120; it reads MEKYLIKMPI…PSPEKEKPEK (120 aa). Residues 36–50 are compositionally biased toward basic and acidic residues; sequence TKKDTPKELKDKENA. Positions 59-70 are enriched in basic residues; that stretch reads TKGRPGRPAVKR. Over residues 71-91 the composition is skewed to basic and acidic residues; that stretch reads KNLDNPDAKAEKKATEEENPP. Serine 104, serine 110, and serine 112 each carry phosphoserine. The 169-residue stretch at 146–314 folds into the 3'-5' exonuclease domain; sequence VLQWVEKQKD…GQVIYRELER (169 aa). Mg(2+) is bound by residues aspartate 163, glutamate 165, and aspartate 301.

The protein belongs to the WRNexo family.

It is found in the nucleus. In terms of biological role, has exonuclease activity on both single-stranded and duplex templates bearing overhangs, but not blunt ended duplex DNA, and cleaves in a 3'-5' direction. Essential for the formation of DNA replication focal centers. Has an important role in maintaining genome stability. The protein is 3'-5' exonuclease of Drosophila yakuba (Fruit fly).